Consider the following 208-residue polypeptide: Hemocyanin, units E and F (208 aa).

A Cu cation-binding site is contributed by His-1. The tract at residues 1–74 is unit E; the sequence is HGLPAQCPNA…HDLESVRGNL (74 aa). A disulfide bond links Cys-7 and Cys-18. The segment at residues 19-21 is a cross-link (2'-(S-cysteinyl)-histidine (Cys-His)); sequence CLH. The N-linked (GlcNAc...) asparagine glycan is linked to Asn-43. Residues 75–208 are unit F; it reads VRKNVDRLSL…GHLSLLSPET (134 aa). His-113 contributes to the Cu cation binding site. A disulfide bridge links Cys-119 with Cys-130. The segment at residues 131-133 is a cross-link (2'-(S-cysteinyl)-histidine (Cys-His)); the sequence is CLH. Residues His-133 and His-142 each coordinate Cu cation.

This sequence belongs to the tyrosinase family. Hemocyanin subfamily. Decamers of large identical subunits (390 kDa), each containing 8 globular oxygen-binding functional units. Cu(2+) serves as cofactor.

Its function is as follows. Hemocyanins are copper-containing oxygen carriers occurring freely dissolved in the hemolymph of many mollusks and arthropods. This is Hemocyanin, units E and F from Sepia officinalis (Common cuttlefish).